The following is a 374-amino-acid chain: Ribosomal RNA large subunit methyltransferase G (374 aa).

The protein belongs to the methyltransferase superfamily. RlmG family.

It is found in the cytoplasm. It catalyses the reaction guanosine(1835) in 23S rRNA + S-adenosyl-L-methionine = N(2)-methylguanosine(1835) in 23S rRNA + S-adenosyl-L-homocysteine + H(+). In terms of biological role, specifically methylates the guanine in position 1835 (m2G1835) of 23S rRNA. The sequence is that of Ribosomal RNA large subunit methyltransferase G from Pseudomonas paraeruginosa (strain DSM 24068 / PA7) (Pseudomonas aeruginosa (strain PA7)).